The chain runs to 126 residues: Holo-[acyl-carrier-protein] synthase (126 aa).

Residues Asp8 and Glu57 each coordinate Mg(2+).

The protein belongs to the P-Pant transferase superfamily. AcpS family. Requires Mg(2+) as cofactor.

It localises to the cytoplasm. The enzyme catalyses apo-[ACP] + CoA = holo-[ACP] + adenosine 3',5'-bisphosphate + H(+). Its function is as follows. Transfers the 4'-phosphopantetheine moiety from coenzyme A to a Ser of acyl-carrier-protein. In Vibrio cholerae serotype O1 (strain ATCC 39541 / Classical Ogawa 395 / O395), this protein is Holo-[acyl-carrier-protein] synthase.